The chain runs to 68 residues: Alpha-conotoxin PIVA (68 aa).

An N-terminal signal peptide occupies residues 1-16 (MFTVFLLVVLATTVVS). The propeptide occupies 17–41 (FTSDRASDDRNTNDKASRLLSHVVR). 3 disulfides stabilise this stretch: cysteine 43–cysteine 57, cysteine 44–cysteine 52, and cysteine 55–cysteine 64. Proline 48 and proline 54 each carry 4-hydroxyproline; partial. Residue proline 61 is modified to 4-hydroxyproline. The residue at position 66 (glutamine 66) is a Glutamine amide.

It belongs to the conotoxin A superfamily. As to expression, expressed by the venom duct.

It localises to the secreted. Its function is as follows. Alpha-conotoxins act on postsynaptic membranes, they bind to the nicotinic acetylcholine receptors (nAChR) and thus inhibit them. This toxin has higher affinity for the adult subtype (alpha-1-beta-1-gamma-delta (CHRNA1-CHRNB1-CHRNG-CHRND) subunits) (IC(50)=2.3 nM) of the receptor than for the fetal subtype (alpha-1-beta-1-epsilon-delta (CHRNA1-CHRNB1-CHRND-CHRNE) subunits) (IC(50)=22 nM). The polypeptide is Alpha-conotoxin PIVA (Conus purpurascens (Purple cone)).